Consider the following 760-residue polypeptide: Serine/threonine-protein kinase PknG (760 aa).

The disordered stretch occupies residues 1 to 31 (MTSPENPDLPDADDAYVDSGPGTQPASLEDL). A Protein kinase domain is found at 161–403 (YEIKGCIAHG…SAEEMSSQLL (243 aa)). ATP is bound by residues 167-175 (IAHGGLGWV) and lysine 191. Aspartate 286 serves as the catalytic Proton acceptor.

The protein belongs to the protein kinase superfamily. Ser/Thr protein kinase family. Interacts with GarA in vitro.

It carries out the reaction L-seryl-[protein] + ATP = O-phospho-L-seryl-[protein] + ADP + H(+). The catalysed reaction is L-threonyl-[protein] + ATP = O-phospho-L-threonyl-[protein] + ADP + H(+). The polypeptide is Serine/threonine-protein kinase PknG (pknG) (Mycolicibacterium smegmatis (strain ATCC 700084 / mc(2)155) (Mycobacterium smegmatis)).